The chain runs to 276 residues: Urease accessory protein UreD (276 aa).

Belongs to the UreD family. UreD, UreF and UreG form a complex that acts as a GTP-hydrolysis-dependent molecular chaperone, activating the urease apoprotein by helping to assemble the nickel containing metallocenter of UreC. The UreE protein probably delivers the nickel.

Its subcellular location is the cytoplasm. Required for maturation of urease via the functional incorporation of the urease nickel metallocenter. This is Urease accessory protein UreD from Polaromonas sp. (strain JS666 / ATCC BAA-500).